The sequence spans 336 residues: Mitochondrial import receptor subunit TOM40 homolog (336 aa).

Residues 1-58 (MGNVLAASSPAPPAAGSPPAPGLVSVPPGFTMPPVAGLTPTPDKKETQEDRLPNPGTF) form a disordered region. A compositionally biased stretch (pro residues) spans 10–21 (PAPPAAGSPPAP). Residues 42-52 (PDKKETQEDRL) are compositionally biased toward basic and acidic residues.

This sequence belongs to the Tom40 family. In terms of assembly, forms part of the preprotein translocase complex of the outer mitochondrial membrane (TOM complex). Interacts with mitochondrial targeting sequences.

It is found in the mitochondrion outer membrane. Its function is as follows. Channel-forming protein essential for import of protein precursors into mitochondria. This Xenopus tropicalis (Western clawed frog) protein is Mitochondrial import receptor subunit TOM40 homolog (tomm40).